Here is a 197-residue protein sequence, read N- to C-terminus: MQIVLASQSPSRLMILRQAGVEPVIHPAHVDEDAIIAQLAGAEPDEIVTRLALAKAQAIAPEHPGDVVIGGDSMLLLDGQLQGKPHTPEATIERWRQQRGRTAHLITGHAICLGERRVVEASRTTIHFADASDTDIEAYARSGEPLQCAGAFTLEALGGWFIDAIEGDPSSVIGLSLPVVRRALYSFGLNASDFWTK.

Catalysis depends on aspartate 72, which acts as the Proton acceptor.

This sequence belongs to the Maf family. It depends on a divalent metal cation as a cofactor.

Its subcellular location is the cytoplasm. It catalyses the reaction a ribonucleoside 5'-triphosphate + H2O = a ribonucleoside 5'-phosphate + diphosphate + H(+). The enzyme catalyses a 2'-deoxyribonucleoside 5'-triphosphate + H2O = a 2'-deoxyribonucleoside 5'-phosphate + diphosphate + H(+). Functionally, nucleoside triphosphate pyrophosphatase. May have a dual role in cell division arrest and in preventing the incorporation of modified nucleotides into cellular nucleic acids. The protein is Nucleoside triphosphate pyrophosphatase of Corynebacterium efficiens (strain DSM 44549 / YS-314 / AJ 12310 / JCM 11189 / NBRC 100395).